Here is a 317-residue protein sequence, read N- to C-terminus: Olfactory receptor 2T27 (317 aa).

Residues 1 to 22 (MEQSNYSVYADFILLGLFSNAR) lie on the Extracellular side of the membrane. Residue Asn5 is glycosylated (N-linked (GlcNAc...) asparagine). Residues 23–43 (FPWLLFALILLVFLTSIASNV) form a helical membrane-spanning segment. The Cytoplasmic segment spans residues 44 to 60 (VKIILIHIDSRLHTPMY). The helical transmembrane segment at 61–83 (FLLSQLSLRDILYISTIVPKMLV) threads the bilayer. Over 84–97 (DQVMSQRAISFAGC) the chain is Extracellular. The cysteines at positions 97 and 189 are disulfide-linked. Residues 98–118 (TAQHFLYLTLAGAEFFLLGLM) traverse the membrane as a helical segment. Topologically, residues 119 to 139 (SYDRYVAICNPLHYPVLMSRK) are cytoplasmic. The chain crosses the membrane as a helical span at residues 140 to 160 (ICWLIVAAAWLGGSIDGFLLT). The Extracellular segment spans residues 161–197 (PVTMQFPFCASREINHFFCEVPALLKLSCTDTSAYET). A helical transmembrane segment spans residues 198–218 (AMYVCCIMMLLIPFSVISGSY). The Cytoplasmic portion of the chain corresponds to 219 to 244 (TRILITVYRMSEAEGRGKAVATCSSH). The chain crosses the membrane as a helical span at residues 245–265 (MVVVSLFYGAAMYTYVLPHSY). At 266–271 (HTPEQD) the chain is on the extracellular side. A helical membrane pass occupies residues 272-292 (KAVSAFYTILTPMLNPLIYSL). Residues 293 to 317 (RNKDVTGALQKVVGRCVSSGKVTTF) lie on the Cytoplasmic side of the membrane.

This sequence belongs to the G-protein coupled receptor 1 family.

Its subcellular location is the cell membrane. Its function is as follows. Odorant receptor. This is Olfactory receptor 2T27 (OR2T27) from Homo sapiens (Human).